The primary structure comprises 182 residues: Ribosome maturation factor RimM (182 aa).

Positions 103 to 182 (EDEFYWRELF…RIEVDWDPGF (80 aa)) constitute a PRC barrel domain.

It belongs to the RimM family. In terms of assembly, binds ribosomal protein uS19.

The protein localises to the cytoplasm. Functionally, an accessory protein needed during the final step in the assembly of 30S ribosomal subunit, possibly for assembly of the head region. Essential for efficient processing of 16S rRNA. May be needed both before and after RbfA during the maturation of 16S rRNA. It has affinity for free ribosomal 30S subunits but not for 70S ribosomes. This chain is Ribosome maturation factor RimM, found in Vibrio campbellii (strain ATCC BAA-1116).